The following is an 871-amino-acid chain: Tegument protein UL47 homolog (871 aa).

The tract at residues 1-212 (MDQHHGARGG…DEDDMEVIRD (212 aa)) is disordered. The short motif at 13–33 (IRRPRRSIESRSHPFRATGNT) is the Nuclear localization signal element. 2 stretches are compositionally biased toward polar residues: residues 30–41 (TGNTQRTYSTPR) and 59–81 (EQASNQDESSNPSTSNAQQSTSF). Acidic residues-rich tracts occupy residues 114–134 (SSSEEEEEEGPAQAPLDEEDQ), 146–155 (SSDENDEEED), and 185–207 (SESETDIDAEEEEEDDEDDEDDM).

The protein belongs to the alphaherpesvirinae HHV-1 UL47 family. Interacts with US3 kinase. Interacts with UL31 and UL34; these interactions seem important for efficient virion nuclear egress. Interacts with UL41/VHS. In terms of processing, phosphorylated by US3. This phosphorylation is required for proper nuclear localization.

It is found in the virion tegument. The protein resides in the host nucleus. The protein localises to the host cytoplasm. Functionally, tegument protein that can bind to various RNA transcripts. Plays a role in the attenuation of selective viral and cellular mRNA degradation by modulating the activity of host shutoff RNase UL41/VHS. Also plays a role in the primary envelopment of virions in the perinuclear space, probably by interacting with two nuclear egress proteins UL31 and UL34. The sequence is that of Tegument protein UL47 homolog from Equus caballus (Horse).